Here is a 382-residue protein sequence, read N- to C-terminus: Farnesyl diphosphate synthase (382 aa).

Positions 81, 84, and 120 each coordinate isopentenyl diphosphate. 2 residues coordinate Mg(2+): Asp-127 and Asp-131. Position 136 (Arg-136) interacts with dimethylallyl diphosphate. Arg-137 is an isopentenyl diphosphate binding site. Lys-230, Thr-231, Gln-270, Lys-287, and Lys-296 together coordinate dimethylallyl diphosphate.

This sequence belongs to the FPP/GGPP synthase family. Requires Mg(2+) as cofactor.

Its subcellular location is the cytoplasm. It carries out the reaction isopentenyl diphosphate + dimethylallyl diphosphate = (2E)-geranyl diphosphate + diphosphate. It catalyses the reaction isopentenyl diphosphate + (2E)-geranyl diphosphate = (2E,6E)-farnesyl diphosphate + diphosphate. The protein operates within isoprenoid biosynthesis; farnesyl diphosphate biosynthesis; farnesyl diphosphate from geranyl diphosphate and isopentenyl diphosphate: step 1/1. It participates in isoprenoid biosynthesis; geranyl diphosphate biosynthesis; geranyl diphosphate from dimethylallyl diphosphate and isopentenyl diphosphate: step 1/1. With respect to regulation, inhibited by aminobisphosphonate drugs (aBP), such as risedronate and alendronate. Key enzyme in isoprenoid biosynthesis which catalyzes the formation of farnesyl diphosphate (FPP), a sterol precursor. Involved in the inhibition of cell growth. The protein is Farnesyl diphosphate synthase (fps) of Dictyostelium discoideum (Social amoeba).